A 283-amino-acid polypeptide reads, in one-letter code: Pantothenate synthetase 1 (283 aa).

30 to 37 (MGYLHDGH) is a binding site for ATP. Histidine 37 acts as the Proton donor in catalysis. Glutamine 61 contacts (R)-pantoate. Glutamine 61 is a beta-alanine binding site. Residue 147 to 150 (GQKD) participates in ATP binding. Glutamine 153 contributes to the (R)-pantoate binding site. Residues valine 176 and 184 to 187 (MSSR) contribute to the ATP site.

The protein belongs to the pantothenate synthetase family. As to quaternary structure, homodimer.

It localises to the cytoplasm. It catalyses the reaction (R)-pantoate + beta-alanine + ATP = (R)-pantothenate + AMP + diphosphate + H(+). It functions in the pathway cofactor biosynthesis; (R)-pantothenate biosynthesis; (R)-pantothenate from (R)-pantoate and beta-alanine: step 1/1. Catalyzes the condensation of pantoate with beta-alanine in an ATP-dependent reaction via a pantoyl-adenylate intermediate. In Bradyrhizobium diazoefficiens (strain JCM 10833 / BCRC 13528 / IAM 13628 / NBRC 14792 / USDA 110), this protein is Pantothenate synthetase 1.